Consider the following 256-residue polypeptide: Pro-opiomelanocortin (256 aa).

A signal peptide spans 1–26 (MPRSCYSRSGTLLLALLLQISMEVRG). A disulfide bridge connects residues C28 and C50. T71 carries O-linked (GalNAc...) threonine glycosylation. Residue F87 is modified to Phenylalanine amide. Residues 88-120 (GRGNSSGASQKREEEAAAADPGFHGDGVEPGLR) form a disordered region. N91 is a glycosylation site (N-linked (GlcNAc...) asparagine). A propeptide spanning residues 100–122 (EEEAAAADPGFHGDGVEPGLRED) is cleaved from the precursor. S125 is modified (N-acetylserine; in Corticotropin). At V137 the chain carries Valine amide. Phosphoserine is present on S155.

Belongs to the POMC family. In terms of processing, specific enzymatic cleavages at paired basic residues yield the different active peptides. As to expression, ACTH and MSH are produced by the pituitary gland.

It localises to the secreted. ACTH stimulates the adrenal glands to release cortisol. Functionally, MSH (melanocyte-stimulating hormone) increases the pigmentation of skin by increasing melanin production in melanocytes. In terms of biological role, beta-endorphin and Met-enkephalin are endogenous opiates. Its function is as follows. Stimulates the adrenal glands to release cortisol. Anorexigenic peptide. Increases the pigmentation of skin by increasing melanin production in melanocytes. Functionally, increases the pigmentation of skin by increasing melanin production in melanocytes. In terms of biological role, endogenous orexigenic opiate. Its function is as follows. Endogenous opiate. This is Pro-opiomelanocortin (POMC) from Cavia porcellus (Guinea pig).